We begin with the raw amino-acid sequence, 338 residues long: Probable arabinan endo-1,5-alpha-L-arabinosidase A (338 aa).

The N-terminal stretch at Met1–Ala20 is a signal peptide. The Proton acceptor role is filled by Asp33. The active-site Proton donor is Glu217.

It belongs to the glycosyl hydrolase 43 family.

Its subcellular location is the secreted. It carries out the reaction Endohydrolysis of (1-&gt;5)-alpha-arabinofuranosidic linkages in (1-&gt;5)-arabinans.. It participates in glycan metabolism; L-arabinan degradation. Its function is as follows. Endo-1,5-alpha-L-arabinanase involved in degradation of pectin. Its preferred substrate is linear 1,5-alpha-L-arabinan. In Aspergillus terreus (strain NIH 2624 / FGSC A1156), this protein is Probable arabinan endo-1,5-alpha-L-arabinosidase A (abnA).